A 66-amino-acid polypeptide reads, in one-letter code: Small ribosomal subunit protein bS21 (66 aa).

This sequence belongs to the bacterial ribosomal protein bS21 family.

The protein is Small ribosomal subunit protein bS21 of Bdellovibrio bacteriovorus (strain ATCC 15356 / DSM 50701 / NCIMB 9529 / HD100).